A 334-amino-acid polypeptide reads, in one-letter code: Fructose-1,6-bisphosphatase class 1 (334 aa).

Positions 90, 113, 115, and 116 each coordinate Mg(2+). Residues 116–119 (DGSS), Asn209, Tyr242, and Lys272 each bind substrate. Position 278 (Glu278) interacts with Mg(2+).

It belongs to the FBPase class 1 family. In terms of assembly, homotetramer. It depends on Mg(2+) as a cofactor.

The protein localises to the cytoplasm. The catalysed reaction is beta-D-fructose 1,6-bisphosphate + H2O = beta-D-fructose 6-phosphate + phosphate. Its pathway is carbohydrate biosynthesis; gluconeogenesis. The polypeptide is Fructose-1,6-bisphosphatase class 1 (Actinobacillus pleuropneumoniae serotype 7 (strain AP76)).